Consider the following 275-residue polypeptide: Elongation factor Ts (275 aa).

The involved in Mg(2+) ion dislocation from EF-Tu stretch occupies residues 76–79; sequence TDFV.

This sequence belongs to the EF-Ts family.

The protein resides in the cytoplasm. Associates with the EF-Tu.GDP complex and induces the exchange of GDP to GTP. It remains bound to the aminoacyl-tRNA.EF-Tu.GTP complex up to the GTP hydrolysis stage on the ribosome. The protein is Elongation factor Ts of Salinispora tropica (strain ATCC BAA-916 / DSM 44818 / JCM 13857 / NBRC 105044 / CNB-440).